We begin with the raw amino-acid sequence, 207 residues long: MSPLLRRLLLAVLLQLAPAQAPVSQPDAPGHQKKVVSWIDVYARATCQPREVVVPLNMELMGTVAKQLVPSCVTVQRCGGCCPDDGLECVPTGQHQVRMQILMIQYPSSQLGEMSLEEHSQCECRPKKRESAVKPDRASTPHHRPQPRSVPGWDPAPGAPSPADITHPTPAPGPSAHAAPSAASALTPGPATAAADAAASSVVKGGA.

The signal sequence occupies residues 1–21 (MSPLLRRLLLAVLLQLAPAQA). Disulfide bonds link cysteine 47/cysteine 89, cysteine 78/cysteine 122, and cysteine 82/cysteine 124. Over residues 124-139 (CRPKKRESAVKPDRAS) the composition is skewed to basic and acidic residues. Residues 124–207 (CRPKKRESAV…AASSVVKGGA (84 aa)) are disordered. Residues 174 to 201 (PSAHAAPSAASALTPGPATAAADAAASS) show a composition bias toward low complexity.

It belongs to the PDGF/VEGF growth factor family. Homodimer; disulfide-linked. Can also form heterodimer with VEGF. Post-translationally, VEGF-B186 is O-glycosylated.

It localises to the secreted. Functionally, growth factor for endothelial cells. VEGF-B167 binds heparin and neuropilin-1 whereas the binding to neuropilin-1 of VEGF-B186 is regulated by proteolysis. This is Vascular endothelial growth factor B (VEGFB) from Bos taurus (Bovine).